Reading from the N-terminus, the 467-residue chain is Nuclear distribution protein nudF (467 aa).

Positions 9 to 41 constitute a LisH domain; it reads QAEELHKSIIAYLASVNLTESSAALRAELGDSV. A coiled-coil region spans residues 60–87; that stretch reads TSVVRLQKKIMDLESRCAALQSELDSAT. WD repeat units follow at residues 113-154, 156-196, 200-247, 250-289, 292-352, 354-393, 398-428, and 429-466; these read GHRN…RTVK, HTKA…KNIR, GHDH…CVKT, GHVD…TKST, GHEH…IKTL, GHDN…KCVR, AHGH…NGTP, and AATS…RIFA. The interval 417-439 is disordered; sequence GANGEAETNGTPAATSTTNGVRP. The span at 422-436 shows a compositional bias: polar residues; sequence AETNGTPAATSTTNG.

The protein belongs to the WD repeat LIS1/nudF family. In terms of assembly, self-associates. Interacts with nudE and dynein.

It localises to the cytoplasm. The protein localises to the cytoskeleton. Its subcellular location is the spindle pole. In terms of biological role, positively regulates the activity of the minus-end directed microtubule motor protein dynein. May enhance dynein-mediated microtubule sliding by targeting dynein to the microtubule plus end. Required for nuclear migration during vegetative growth as well as development. Required for retrograde early endosome (EE) transport from the hyphal tip. Required for localization of dynein to the mitotic spindle poles. Recruits additional proteins to the dynein complex at SPBs. The sequence is that of Nuclear distribution protein nudF from Aspergillus fumigatus (strain CBS 144.89 / FGSC A1163 / CEA10) (Neosartorya fumigata).